Consider the following 340-residue polypeptide: Glyceraldehyde-3-phosphate dehydrogenase (340 aa).

NAD(+) contacts are provided by residues Thr13–Ile14 and Gly112. Ser141–Asn143 serves as a coordination point for D-glyceraldehyde 3-phosphate. Residue Cys142 is the Nucleophile of the active site. Arg170 contributes to the NAD(+) binding site. Position 196-197 (His196–Gly197) interacts with D-glyceraldehyde 3-phosphate. NAD(+) is bound at residue Gln302.

Belongs to the glyceraldehyde-3-phosphate dehydrogenase family. In terms of assembly, homotetramer.

Its subcellular location is the cytoplasm. It catalyses the reaction D-glyceraldehyde 3-phosphate + phosphate + NADP(+) = (2R)-3-phospho-glyceroyl phosphate + NADPH + H(+). It carries out the reaction D-glyceraldehyde 3-phosphate + phosphate + NAD(+) = (2R)-3-phospho-glyceroyl phosphate + NADH + H(+). The protein operates within carbohydrate degradation; glycolysis; pyruvate from D-glyceraldehyde 3-phosphate: step 1/5. The polypeptide is Glyceraldehyde-3-phosphate dehydrogenase (gap) (Archaeoglobus fulgidus (strain ATCC 49558 / DSM 4304 / JCM 9628 / NBRC 100126 / VC-16)).